Consider the following 411-residue polypeptide: Bestrophin homolog 26 (411 aa).

A run of 4 helical transmembrane segments spans residues 30–50, 73–93, 235–255, and 272–292; these read FTAI…FMVI, SHQE…SSVV, IPIP…YFAV, and TWIT…MGWM.

This sequence belongs to the anion channel-forming bestrophin (TC 1.A.46) family. Calcium-sensitive chloride channel subfamily. Forms oligomers.

The protein localises to the cell membrane. Forms chloride channels. This is Bestrophin homolog 26 (best-26) from Caenorhabditis elegans.